A 236-amino-acid chain; its full sequence is MITCLIVDDELFAREELADSLSQEADIEIIGQCSNAIEALQTITKEKPQLVFLDIQMPRISGMELIAMLDPDTLPKIVFVTAFDEFAVKAFDNHAFDYLLKPIDADRLSKTLKRVRKDLTPQAVNLIAPRSLEHLPCYSGSKLKVIPIQDVEYVFSDLSGIHVACTKGKVHTQLTLKVLEEKTPLVHCHRQYLISPKAIAEIELLDTGAEVTTLLGDKVPVSRRYLKSLKQLFGFQ.

Residues 3–116 form the Response regulatory domain; it reads TCLIVDDELF…RLSKTLKRVR (114 aa). D54 is modified (4-aspartylphosphate). The HTH LytTR-type domain maps to 135-235; it reads LPCYSGSKLK…LKSLKQLFGF (101 aa).

This is an uncharacterized protein from Shewanella oneidensis (strain ATCC 700550 / JCM 31522 / CIP 106686 / LMG 19005 / NCIMB 14063 / MR-1).